Reading from the N-terminus, the 259-residue chain is ATP synthase subunit a 1 (259 aa).

The next 5 membrane-spanning stretches (helical) occupy residues 30 to 50 (TLHV…LFFF), 90 to 110 (LIAP…AMDL), 135 to 155 (DLNA…FYSL), 209 to 229 (LIFI…SFPW), and 230 to 250 (AVFH…LTIV).

Belongs to the ATPase A chain family. F-type ATPases have 2 components, CF(1) - the catalytic core - and CF(0) - the membrane proton channel. CF(1) has five subunits: alpha(3), beta(3), gamma(1), delta(1), epsilon(1). CF(0) has three main subunits: a(1), b(2) and c(9-12). The alpha and beta chains form an alternating ring which encloses part of the gamma chain. CF(1) is attached to CF(0) by a central stalk formed by the gamma and epsilon chains, while a peripheral stalk is formed by the delta and b chains.

The protein localises to the cell inner membrane. Functionally, key component of the proton channel; it plays a direct role in the translocation of protons across the membrane. The polypeptide is ATP synthase subunit a 1 (Methylococcus capsulatus (strain ATCC 33009 / NCIMB 11132 / Bath)).